Reading from the N-terminus, the 42-residue chain is Small protein MntS (42 aa).

It is found in the cytoplasm. Functionally, required for repression of mntH by MntR. May function as a chaperone that makes manganese more available by delivering it to the necessary cellular locations when manganese is limiting. The chain is Small protein MntS (mntS) from Escherichia coli (strain K12).